The primary structure comprises 517 residues: Crotonobetaine/carnitine--CoA ligase (517 aa).

Belongs to the ATP-dependent AMP-binding enzyme family.

It carries out the reaction 4-(trimethylamino)butanoate + ATP + CoA = 4-(trimethylamino)butanoyl-CoA + AMP + diphosphate. It catalyses the reaction crotonobetaine + ATP + CoA = crotonobetainyl-CoA + AMP + diphosphate. The catalysed reaction is (R)-carnitine + ATP + CoA = (R)-carnitinyl-CoA + AMP + diphosphate. Its pathway is amine and polyamine metabolism; carnitine metabolism. Catalyzes the transfer of CoA to carnitine, generating the initial carnitinyl-CoA needed for the CaiB reaction cycle. Also has activity toward crotonobetaine and gamma-butyrobetaine. The chain is Crotonobetaine/carnitine--CoA ligase from Salmonella arizonae (strain ATCC BAA-731 / CDC346-86 / RSK2980).